An 811-amino-acid chain; its full sequence is Abnormal pharyngeal pumping eat-20 (811 aa).

The signal sequence occupies residues 1 to 20 (MTTFCRVLLIFGIYVAVSCA). Residues 21 to 749 (QSVEDDVFHF…GKQSSAVASW (729 aa)) are Extracellular-facing. 3 N-linked (GlcNAc...) asparagine glycosylation sites follow: Asn-90, Asn-171, and Asn-232. EGF-like domains lie at 220–257 (PPSP…DRCE), 258–293 (LDVC…LLCE), and 301–335 (AAPI…ANCN). 9 cysteine pairs are disulfide-bonded: Cys-224–Cys-235, Cys-229–Cys-245, Cys-247–Cys-256, Cys-261–Cys-272, Cys-266–Cys-281, Cys-283–Cys-292, Cys-305–Cys-314, Cys-309–Cys-323, and Cys-325–Cys-334. An N-linked (GlcNAc...) asparagine glycan is attached at Asn-371. 3 disordered regions span residues 544–579 (FVSP…QVAT), 592–659 (FPTT…AIST), and 690–739 (PHPQ…HTSS). Residues 551–567 (DENEEEEEDETTDETEE) are compositionally biased toward acidic residues. A compositionally biased stretch (polar residues) spans 570–579 (PTPSTMQVAT). A compositionally biased stretch (acidic residues) spans 597-612 (DMEETDEEEDMTEEVT). Residues 626–639 (PSSTTFTTEAPTTT) show a composition bias toward low complexity. 2 stretches are compositionally biased toward acidic residues: residues 640 to 655 (MEEE…ESEE) and 705 to 717 (IESE…ESNE). A helical transmembrane segment spans residues 750-770 (IIATIALIVLGSLLLATSLFV). The Cytoplasmic portion of the chain corresponds to 771–811 (LRYIRQSRKLHGKYNPAREEHNLSAAYAMPMSHIAKEERLI).

The protein localises to the membrane. Functionally, regulates pharyngeal pumping during feeding. The polypeptide is Abnormal pharyngeal pumping eat-20 (eat-20) (Caenorhabditis briggsae).